The following is a 136-amino-acid chain: Large ribosomal subunit protein bL19 (136 aa).

This sequence belongs to the bacterial ribosomal protein bL19 family.

Its function is as follows. This protein is located at the 30S-50S ribosomal subunit interface and may play a role in the structure and function of the aminoacyl-tRNA binding site. The chain is Large ribosomal subunit protein bL19 from Xylella fastidiosa (strain M23).